Reading from the N-terminus, the 469-residue chain is MLSRFIKRTYSTQTSSPVVGIIGSGPAAFYTAHRLLRNDPNVKIDMFESRPVPFGLVRYGVAPDHPEVKHVEHKFSEIAESTQFRFLGNVNVGTDVSLRDLTKNYDCLVLAYGAAGDKRLGIPGEDLSGVYSAREVVGWYNSDPRNQNLELDLSQVEDAVVIGHGNVSLDVARILLSNPAQLSPTDINPLFLKSLERSNLKRLHIVGRRNIFSVSFTIKELRELFALSSAVFFAPSFNYSTKWMNETDASGLDRPRKRLLKLLVSEIQKAVSEKRVAPYSKDKKCWNLEFGLTPVEILGHKGNVENVRFQITDSIRTDAESKFTTIPAQLFIRSIGYKSMPLPGMKDVGVPFDDAKGIVKNVNGFVRPGIYTSGWVKHGPIGVIATTMMDAFATADTITKDWKSKKEFLKNSKLGWDGLKKNIKTPVIHWKDWKVIRNAEIERGLRHESLSEKFRSNEDMIKLIYPGKK.

Residues 1-38 constitute a mitochondrion transit peptide; the sequence is MLSRFIKRTYSTQTSSPVVGIIGSGPAAFYTAHRLLRN. Residues Ala27, Glu48, Leu56, and Val92 each coordinate FAD. NADP(+) is bound by residues 164 to 167, 208 to 209, and Glu220; these read HGNV and RR. FAD is bound by residues Trp375 and 382–384; that span reads GVI. Gly382 is a binding site for NADP(+).

Belongs to the ferredoxin--NADP reductase type 1 family. FAD is required as a cofactor.

The protein localises to the mitochondrion inner membrane. The enzyme catalyses 2 reduced [adrenodoxin] + NADP(+) + H(+) = 2 oxidized [adrenodoxin] + NADPH. Adrenodoxin reductase transfers electrons from NADPH to adrenodoxin, which is involved in heme A biosynthesis and in iron-sulfur cluster assembly. Involved in the electron transfer to heme A synthase etp1(cd), a heme protein that catalyzes the conversion of heme O to heme A. Required for the de novo synthesis of Fe-S clusters on iron sulfur cluster assembly protein isu1. Involved in electron delivery for Fe-S cluster synthesis. Essential for coenzyme Q biosynthesis. May be involved in the electron transfer required for the hydroxylation reaction performed by coq6. May play a role in cellular and mitochondrial iron homeostasis. The polypeptide is Probable NADPH:adrenodoxin oxidoreductase, mitochondrial (arh1) (Schizosaccharomyces pombe (strain 972 / ATCC 24843) (Fission yeast)).